Consider the following 321-residue polypeptide: MAVYTDVAPAELEAFLSGYDIGTLTSFHGIAEGVENSNFLVQTTRGSYILTLYEKRVNRDDLPFFIGLMEHLAARGLSCPQPVAQRSGAVLSEIAGRPAAMVTFLPGVSVRRPTAEHCAELGRGLAQLHLAGADFAMRRANNLSVAGWRPLFVAADGQADDVAPGLADAIAAELATLEANWPQGLPAGVIHADLFPDNAFFLDEKLSGIIDFYFACTDFLAYDVAVCLNAWCFEPDGSYNVTKGRALLSGYEAVRPLSGAEKAALPRLARGAALRFLLTRLVDWLNVPEGALVRPKDPLEYLKKLRFHQAVDSAQDYGLAA.

The protein belongs to the pseudomonas-type ThrB family.

The catalysed reaction is L-homoserine + ATP = O-phospho-L-homoserine + ADP + H(+). Its pathway is amino-acid biosynthesis; L-threonine biosynthesis; L-threonine from L-aspartate: step 4/5. This Xanthobacter autotrophicus (strain ATCC BAA-1158 / Py2) protein is Homoserine kinase.